Here is a 331-residue protein sequence, read N- to C-terminus: MSGQPMAGRDGARLESFLEMMSAERGAAANTLSSYEHDLADLREFLGRRGQSLTEAQTPDLSAYLTHLAAQGFAATSQARRLSSMRQFYRFLYSEGLRGDDPTGIIDAPRKGLALPKTMSVADVNRLLGLAAQEAATEGPGQLARIRMHLLLELLYATGMRVSELVSLPVKVLRQEGRFLMIRGKGNKDRMVLLSRAAIEAMEKYEAGRKALSQEKSKAAASQKKTDTAESPWLFPSNSKEGHLPRQVFARDLKDIAIRAGLTASAVSPHVLRHAFASHLLQNGADLRAVQELLGHSDISTTQIYTHVLEERLQELVQTHHPLAKQGKNLD.

One can recognise a Core-binding (CB) domain in the interval Gly-8 to Tyr-93. A Tyr recombinase domain is found at Ala-114 to Gln-318. Catalysis depends on residues Arg-161 and Lys-185. Over residues Gln-214 to Thr-228 the composition is skewed to basic and acidic residues. The tract at residues Gln-214–Ser-239 is disordered. Residues His-270, Arg-273, and His-296 contribute to the active site. Tyr-305 (O-(3'-phospho-DNA)-tyrosine intermediate) is an active-site residue.

The protein belongs to the 'phage' integrase family. XerD subfamily. In terms of assembly, forms a cyclic heterotetrameric complex composed of two molecules of XerC and two molecules of XerD.

Its subcellular location is the cytoplasm. Functionally, site-specific tyrosine recombinase, which acts by catalyzing the cutting and rejoining of the recombining DNA molecules. The XerC-XerD complex is essential to convert dimers of the bacterial chromosome into monomers to permit their segregation at cell division. It also contributes to the segregational stability of plasmids. In Agrobacterium fabrum (strain C58 / ATCC 33970) (Agrobacterium tumefaciens (strain C58)), this protein is Tyrosine recombinase XerD.